The sequence spans 501 residues: Glycerol kinase (501 aa).

Residue threonine 11 participates in ADP binding. Positions 11, 12, and 13 each coordinate ATP. Threonine 11 lines the sn-glycerol 3-phosphate pocket. Arginine 15 is a binding site for ADP. The sn-glycerol 3-phosphate site is built by arginine 81, glutamate 82, tyrosine 133, and aspartate 242. Residues arginine 81, glutamate 82, tyrosine 133, aspartate 242, and glutamine 243 each coordinate glycerol. ADP contacts are provided by threonine 264 and glycine 307. ATP contacts are provided by threonine 264, glycine 307, glutamine 311, and glycine 409. ADP contacts are provided by glycine 409 and asparagine 413.

It belongs to the FGGY kinase family.

It carries out the reaction glycerol + ATP = sn-glycerol 3-phosphate + ADP + H(+). Its pathway is polyol metabolism; glycerol degradation via glycerol kinase pathway; sn-glycerol 3-phosphate from glycerol: step 1/1. Inhibited by fructose 1,6-bisphosphate (FBP). Functionally, key enzyme in the regulation of glycerol uptake and metabolism. Catalyzes the phosphorylation of glycerol to yield sn-glycerol 3-phosphate. This Borreliella burgdorferi (strain ATCC 35210 / DSM 4680 / CIP 102532 / B31) (Borrelia burgdorferi) protein is Glycerol kinase.